We begin with the raw amino-acid sequence, 210 residues long: Ribosomal RNA small subunit methyltransferase G (210 aa).

Residues G76, L81, 127 to 128, and R142 contribute to the S-adenosyl-L-methionine site; that span reads VE.

It belongs to the methyltransferase superfamily. RNA methyltransferase RsmG family.

It is found in the cytoplasm. The catalysed reaction is guanosine(527) in 16S rRNA + S-adenosyl-L-methionine = N(7)-methylguanosine(527) in 16S rRNA + S-adenosyl-L-homocysteine. Specifically methylates the N7 position of guanine in position 527 of 16S rRNA. This chain is Ribosomal RNA small subunit methyltransferase G, found in Vibrio atlanticus (strain LGP32) (Vibrio splendidus (strain Mel32)).